Here is a 399-residue protein sequence, read N- to C-terminus: Bifunctional enzyme IspD/IspF (399 aa).

The tract at residues 1 to 235 (METWALILAA…MVEQPKTTVP (235 aa)) is 2-C-methyl-D-erythritol 4-phosphate cytidylyltransferase. Positions 236–399 (IVGYGYDVHK…IVIVTAIRIS (164 aa)) are 2-C-methyl-D-erythritol 2,4-cyclodiphosphate synthase. Residues aspartate 242 and histidine 244 each contribute to the a divalent metal cation site. Residues 242–244 (DVH) and 275–276 (HS) contribute to the 4-CDP-2-C-methyl-D-erythritol 2-phosphate site. Histidine 283 is a binding site for a divalent metal cation. Residues 297 to 299 (DIG), 302 to 306 (FPDSD), 373 to 376 (TTEE), and phenylalanine 380 contribute to the 4-CDP-2-C-methyl-D-erythritol 2-phosphate site.

It in the N-terminal section; belongs to the IspD/TarI cytidylyltransferase family. IspD subfamily. This sequence in the C-terminal section; belongs to the IspF family. Requires a divalent metal cation as cofactor.

The catalysed reaction is 2-C-methyl-D-erythritol 4-phosphate + CTP + H(+) = 4-CDP-2-C-methyl-D-erythritol + diphosphate. The enzyme catalyses 4-CDP-2-C-methyl-D-erythritol 2-phosphate = 2-C-methyl-D-erythritol 2,4-cyclic diphosphate + CMP. Its pathway is isoprenoid biosynthesis; isopentenyl diphosphate biosynthesis via DXP pathway; isopentenyl diphosphate from 1-deoxy-D-xylulose 5-phosphate: step 2/6. It functions in the pathway isoprenoid biosynthesis; isopentenyl diphosphate biosynthesis via DXP pathway; isopentenyl diphosphate from 1-deoxy-D-xylulose 5-phosphate: step 4/6. Functionally, bifunctional enzyme that catalyzes the formation of 4-diphosphocytidyl-2-C-methyl-D-erythritol from CTP and 2-C-methyl-D-erythritol 4-phosphate (MEP) (IspD), and catalyzes the conversion of 4-diphosphocytidyl-2-C-methyl-D-erythritol 2-phosphate (CDP-ME2P) to 2-C-methyl-D-erythritol 2,4-cyclodiphosphate (ME-CPP) with a corresponding release of cytidine 5-monophosphate (CMP) (IspF). The chain is Bifunctional enzyme IspD/IspF from Lawsonia intracellularis (strain PHE/MN1-00).